Here is a 256-residue protein sequence, read N- to C-terminus: MLHIADKTFASHLFTGTGKFASSQLMVEAIRACGSQLVTLAMKRVDLRQHNDAILEPLIAAGVTLLPNTSGAKTAEEAIFAAHLAREALGTNWLKLEIHPDARWLLPDPIETLKAAETLVQQGFIVLPYCGADPVLCKRLEEVGCAAVMPLGAPIGSNQGLETRAMLEIIIQQATVPVVVDAGIGVPSHAAQALEMGADAVLVNTAIAVADDPVNMAKAFRLAVEAGLLARQSGPGSRSHFAHATSPLTGFLEASA.

Lys-95 serves as the catalytic Schiff-base intermediate with DXP. 1-deoxy-D-xylulose 5-phosphate is bound by residues Gly-156, 182 to 183 (AG), and 204 to 205 (NT).

It belongs to the ThiG family. Homotetramer. Forms heterodimers with either ThiH or ThiS.

It localises to the cytoplasm. The catalysed reaction is [ThiS sulfur-carrier protein]-C-terminal-Gly-aminoethanethioate + 2-iminoacetate + 1-deoxy-D-xylulose 5-phosphate = [ThiS sulfur-carrier protein]-C-terminal Gly-Gly + 2-[(2R,5Z)-2-carboxy-4-methylthiazol-5(2H)-ylidene]ethyl phosphate + 2 H2O + H(+). It participates in cofactor biosynthesis; thiamine diphosphate biosynthesis. Functionally, catalyzes the rearrangement of 1-deoxy-D-xylulose 5-phosphate (DXP) to produce the thiazole phosphate moiety of thiamine. Sulfur is provided by the thiocarboxylate moiety of the carrier protein ThiS. In vitro, sulfur can be provided by H(2)S. The polypeptide is Thiazole synthase (Escherichia coli O81 (strain ED1a)).